The chain runs to 243 residues: Ubiquinone biosynthesis O-methyltransferase (243 aa).

The S-adenosyl-L-methionine site is built by arginine 44, glycine 64, aspartate 85, and methionine 129.

Belongs to the methyltransferase superfamily. UbiG/COQ3 family.

It catalyses the reaction a 3-demethylubiquinol + S-adenosyl-L-methionine = a ubiquinol + S-adenosyl-L-homocysteine + H(+). It carries out the reaction a 3-(all-trans-polyprenyl)benzene-1,2-diol + S-adenosyl-L-methionine = a 2-methoxy-6-(all-trans-polyprenyl)phenol + S-adenosyl-L-homocysteine + H(+). It functions in the pathway cofactor biosynthesis; ubiquinone biosynthesis. In terms of biological role, O-methyltransferase that catalyzes the 2 O-methylation steps in the ubiquinone biosynthetic pathway. The sequence is that of Ubiquinone biosynthesis O-methyltransferase from Erwinia tasmaniensis (strain DSM 17950 / CFBP 7177 / CIP 109463 / NCPPB 4357 / Et1/99).